Consider the following 100-residue polypeptide: Small ribosomal subunit protein uS14c (100 aa).

It belongs to the universal ribosomal protein uS14 family. In terms of assembly, part of the 30S ribosomal subunit.

Its subcellular location is the plastid. The protein localises to the chloroplast. Its function is as follows. Binds 16S rRNA, required for the assembly of 30S particles. This Pisum sativum (Garden pea) protein is Small ribosomal subunit protein uS14c.